The primary structure comprises 323 residues: MDPKSQRVKLNDGHFIPVLGFGTYAPEEVPKSEALEATKFAIEVGFRHVDSAHLYQNEEQVGQAIRSKIADGTVKREDIFYTSKLWCNSLQPELVRPALEKSLQNLQLDYVDLYIIHSPVSLKPGNKFVPKDESGKLIFDSVDLCHTWEALEKCKDAGLTKSIGVSNFNHKQLEKILNKPGLKYKPVCNQVECHPYLNQSKLLEFCKSHDIVLVAYAALGAQLLSEWVNSNNPVLLEDPVLCAIAKKHKQTPALVALRYQVQRGVVVLAKSFNKKRIKENMQVFDFELTPEDMKAIDGLNRNIRYYDFQKGIGHPEYPFSEEY.

NADP(+) contacts are provided by residues 20 to 24 and Asp-50; that span reads GFGTY. Tyr-55 functions as the Proton donor in the catalytic mechanism. His-117 lines the substrate pocket. Residues 166 to 167, Gln-190, 216 to 221, and 270 to 280 each bind NADP(+); these read SN, YAALGA, and KSFNKKRIKEN.

The protein belongs to the aldo/keto reductase family. As to quaternary structure, monomer. Post-translationally, the N-terminus is blocked.

It localises to the cytoplasm. The enzyme catalyses prostaglandin F2alpha + NADP(+) = prostaglandin D2 + NADPH + H(+). Its pathway is lipid metabolism; prostaglandin biosynthesis. Catalyzes the reduction of PGD(2) and PGH(2) to PGF(2 alpha) and a stereoisomer, respectively. It has a broad substrate specificity and also reduces other carbonyl compounds. This chain is Prostaglandin F synthase 1, found in Bos taurus (Bovine).